We begin with the raw amino-acid sequence, 131 residues long: UPF0342 protein DSY1594 (131 aa).

It belongs to the UPF0342 family.

This is UPF0342 protein DSY1594 from Desulfitobacterium hafniense (strain Y51).